The sequence spans 720 residues: DNA replication licensing factor mcm7-A (720 aa).

The segment at 183-210 (CDQCGAETYQPIQSPTFMPLIMCPSREC) adopts a C4-type zinc-finger fold. Residues 331–537 (FYEKLAASIA…NDLRLAQHIT (207 aa)) enclose the MCM domain. Residues Tyr344, Gly383, Ala385, Lys386, Ser387, Asn488, Arg513, and Arg603 each contribute to the ATP site. Positions 512–515 (SRFD) match the Arginine finger motif.

It belongs to the MCM family. As to quaternary structure, component of the mcm2-7 complex (RLF-M). The complex forms a toroidal hexameric ring with the proposed subunit order mcm2-mcm6-mcm4-mcm7-mcm3-mcm5. The heterodimer of mmcm3/mcm5 interacts with mcm4, mmcm6, mcm7 and weakly with mcm2. The N-terminus is required for interaction with mmcm3, though this interaction may not be direct, and remains in a complex with mmcm3 throughout the cell cycle. Begins to associate with zmcm6 at the neurula stage. Component of the replisome complex. Component of the CMG helicase complex, composed of the mcm2-7 complex, the GINS complex and cdc45. Post-translationally, ubiquitinated by traip when forks converge following formation of DNA interstrand cross-links. Ubiquitinated via 'Lys-6'- and 'Lys-63'-linked polyubiquitination by traip. Short ubiquitin chains on mcm7 promote recruitment of DNA glycosylase neil3. If the interstrand cross-link cannot be cleaved by neil3, the ubiquitin chains continue to grow on mcm7, promoting the unloading of the CMG helicase complex by the vcp/p97 ATPase.

The protein localises to the nucleus. It localises to the chromosome. It carries out the reaction ATP + H2O = ADP + phosphate + H(+). Functionally, acts as a component of the mcm2-7 complex (mcm complex) which is the putative replicative helicase essential for 'once per cell cycle' DNA replication initiation and elongation in eukaryotic cells. The active ATPase sites in the mcm2-7 ring are formed through the interaction surfaces of two neighboring subunits such that a critical structure of a conserved arginine finger motif is provided in trans relative to the ATP-binding site of the Walker A box of the adjacent subunit. The six ATPase active sites, however, are likely to contribute differentially to the complex helicase activity. The existence of maternal and zygotic forms of mcm3 and mcm6 suggests that specific forms of mcm2-7 complexes may be used during different stages of development. This is DNA replication licensing factor mcm7-A (mcm7-a) from Xenopus laevis (African clawed frog).